We begin with the raw amino-acid sequence, 215 residues long: Cytochrome b6 (215 aa).

Residues 32–52 traverse the membrane as a helical segment; that stretch reads IFYCLGGITLTCFLVQVATGF. Residue C35 coordinates heme c. Residues H86 and H100 each contribute to the heme b site. The next 3 helical transmembrane spans lie at 90–110, 116–136, and 186–206; these read ASMM…TGGF, LTWV…VTGY, and LHTF…FLMI. Residues H187 and H202 each contribute to the heme b site.

Belongs to the cytochrome b family. PetB subfamily. As to quaternary structure, the 4 large subunits of the cytochrome b6-f complex are cytochrome b6, subunit IV (17 kDa polypeptide, PetD), cytochrome f and the Rieske protein, while the 4 small subunits are PetG, PetL, PetM and PetN. The complex functions as a dimer. Heme b serves as cofactor. Heme c is required as a cofactor.

Its subcellular location is the plastid. The protein resides in the chloroplast thylakoid membrane. Component of the cytochrome b6-f complex, which mediates electron transfer between photosystem II (PSII) and photosystem I (PSI), cyclic electron flow around PSI, and state transitions. The polypeptide is Cytochrome b6 (Hordeum vulgare (Barley)).